The following is a 674-amino-acid chain: Kelch repeat and BTB domain-containing protein 6 (674 aa).

A disordered region spans residues 1–28 (MQSREDAPRSRRLASPRGGKRPKKIHKP). Basic residues predominate over residues 10–27 (SRRLASPRGGKRPKKIHK). Residues 63 to 138 (CDVTIEVVTP…CYTGRVSLSE (76 aa)) enclose the BTB domain. 6 Kelch repeats span residues 386 to 435 (AVCI…YLNG), 436 to 484 (YIYI…VIRD), 486 to 523 (LYAL…VFNE), 524 to 564 (EIYC…IIKH), 567 to 616 (KLLL…CLSA), and 642 to 673 (TEWD…RVAP). Positions 631–674 (TEEEEIPSESSTEWDLGGFSEPDSESGSSSSLSDDDFWVRVAPQ) are disordered. The ATG8 interaction motif (AIM) motif lies at 668–671 (WVRV).

Core component of a BCR3 (BTB-CUL3-RBX1) E3 ubiquitin ligase complex, also named Cul3-RING ubiquitin ligase complex CUL3(KBTBD6/7), composed of CUL3, RBX1, KBTBD6 and KBTBD7. Interacts with GABARAP; the interaction is direct and is required for the ubiquitination of TIAM1. Interacts with GABARAPL1, GABARAPL2 and MAP1LC3B; the interaction is direct.

It is found in the cytoplasm. The protein resides in the nucleus. It participates in protein modification; protein ubiquitination. In terms of biological role, as part of the CUL3(KBTBD6/7) E3 ubiquitin ligase complex functions as a substrate adapter for the RAC1 guanine exchange factor (GEF) TIAM1, mediating its 'Lys-48' ubiquitination and proteasomal degradation. By controlling this ubiquitination, regulates RAC1 signal transduction and downstream biological processes including the organization of the cytoskeleton, cell migration and cell proliferation. Ubiquitination of TIAM1 requires the membrane-associated protein GABARAP which may restrict locally the activity of the complex. This chain is Kelch repeat and BTB domain-containing protein 6, found in Homo sapiens (Human).